Here is a 282-residue protein sequence, read N- to C-terminus: S-formylglutathione hydrolase (282 aa).

Ala-2 carries the N-acetylalanine modification. Position 4 is an N6-succinyllysine (Lys-4). The active-site Charge relay system is the Ser-149. Lys-200 bears the N6-acetyllysine mark. Active-site charge relay system residues include Asp-226 and His-260.

The protein belongs to the esterase D family. Homodimer.

The protein localises to the cytoplasm. Its subcellular location is the cytoplasmic vesicle. The enzyme catalyses S-formylglutathione + H2O = formate + glutathione + H(+). Functionally, serine hydrolase involved in the detoxification of formaldehyde. The polypeptide is S-formylglutathione hydrolase (Esd) (Mus musculus (Mouse)).